Reading from the N-terminus, the 148-residue chain is Hemoglobin subunit beta (148 aa).

One can recognise a Globin domain in the interval 3–148; it reads DWTDAERSAI…VVSALGRQYH (146 aa). Heme b contacts are provided by histidine 64 and histidine 93.

It belongs to the globin family. In terms of assembly, heterotetramer of two alpha chains and two beta chains. In terms of tissue distribution, red blood cells.

Its function is as follows. Involved in oxygen transport from gills to the various peripheral tissues. This is Hemoglobin subunit beta (hbb) from Oncorhynchus nerka (Sockeye salmon).